Reading from the N-terminus, the 413-residue chain is Eukaryotic initiation factor 4A-11 (413 aa).

Residues 40 to 68 (ESFDAMGLQENLLRGIYAYGFEKPSAIQQ) carry the Q motif motif. A Helicase ATP-binding domain is found at 71–241 (IVPFCKGLDV…RKFMNKPVRI (171 aa)). 84–91 (AQSGTGKT) is a binding site for ATP. A DEAD box motif is present at residues 189-192 (DEAD). One can recognise a Helicase C-terminal domain in the interval 252–413 (GIKQFYVNVD…ELPANVADLL (162 aa)).

This sequence belongs to the DEAD box helicase family. eIF4A subfamily. As to quaternary structure, eIF4F is a multi-subunit complex, the composition of which varies with external and internal environmental conditions. It is composed of at least EIF4A, EIF4E and EIF4G.

It carries out the reaction ATP + H2O = ADP + phosphate + H(+). ATP-dependent RNA helicase which is a subunit of the eIF4F complex involved in cap recognition and is required for mRNA binding to ribosome. In the current model of translation initiation, eIF4A unwinds RNA secondary structures in the 5'-UTR of mRNAs which is necessary to allow efficient binding of the small ribosomal subunit, and subsequent scanning for the initiator codon. This chain is Eukaryotic initiation factor 4A-11, found in Nicotiana tabacum (Common tobacco).